Reading from the N-terminus, the 301-residue chain is Pyridoxal 5'-phosphate synthase subunit PdxS (301 aa).

Asp-31 is a binding site for D-ribose 5-phosphate. Lys-88 (schiff-base intermediate with D-ribose 5-phosphate) is an active-site residue. Gly-160 is a D-ribose 5-phosphate binding site. Lys-172 is a D-glyceraldehyde 3-phosphate binding site. D-ribose 5-phosphate-binding positions include Gly-221 and 242–243 (GS).

It belongs to the PdxS/SNZ family. As to quaternary structure, in the presence of PdxT, forms a dodecamer of heterodimers.

It carries out the reaction aldehydo-D-ribose 5-phosphate + D-glyceraldehyde 3-phosphate + L-glutamine = pyridoxal 5'-phosphate + L-glutamate + phosphate + 3 H2O + H(+). It functions in the pathway cofactor biosynthesis; pyridoxal 5'-phosphate biosynthesis. Its function is as follows. Catalyzes the formation of pyridoxal 5'-phosphate from ribose 5-phosphate (RBP), glyceraldehyde 3-phosphate (G3P) and ammonia. The ammonia is provided by the PdxT subunit. Can also use ribulose 5-phosphate and dihydroxyacetone phosphate as substrates, resulting from enzyme-catalyzed isomerization of RBP and G3P, respectively. The polypeptide is Pyridoxal 5'-phosphate synthase subunit PdxS (Methanosarcina mazei (strain ATCC BAA-159 / DSM 3647 / Goe1 / Go1 / JCM 11833 / OCM 88) (Methanosarcina frisia)).